The chain runs to 130 residues: MSATQNYGTGRRKTATARVFLRPGTGNISINNRTLDNFFGRETARMVVRQPLELTETVEKFDIYVTVIGGGVSGQAGAIRHGITRALMQYDETLRGALRKAGFVTRDAREVERKKVGLRKARKRPQYSKR.

The protein belongs to the universal ribosomal protein uS9 family.

The protein is Small ribosomal subunit protein uS9 of Pseudomonas fluorescens (strain SBW25).